The primary structure comprises 84 residues: Polyketide-8 synthase acyl carrier protein 1 (84 aa).

One can recognise a Carrier domain in the interval 7 to 82; the sequence is AARKQEIKEI…GVYVVVSEAA (76 aa). Ser-42 is modified (O-(pantetheine 4'-phosphoryl)serine).

In terms of processing, 4'-phosphopantetheine is transferred from CoA to a specific serine of the apo-ACP-like protein.

Functionally, acyl carrier protein. This Streptomyces avermitilis (strain ATCC 31267 / DSM 46492 / JCM 5070 / NBRC 14893 / NCIMB 12804 / NRRL 8165 / MA-4680) protein is Polyketide-8 synthase acyl carrier protein 1.